Here is a 59-residue protein sequence, read N- to C-terminus: Small ribosomal subunit protein bS21 (59 aa).

The disordered stretch occupies residues 35 to 59 (REHYEKPSVKKKKKSEAAKRKKRNF). Residues 43 to 59 (VKKKKKSEAAKRKKRNF) are compositionally biased toward basic residues.

Belongs to the bacterial ribosomal protein bS21 family.

The sequence is that of Small ribosomal subunit protein bS21 from Finegoldia magna (strain ATCC 29328 / DSM 20472 / WAL 2508) (Peptostreptococcus magnus).